Here is a 1244-residue protein sequence, read N- to C-terminus: Membrane-associated phosphatidylinositol transfer protein 1 (1244 aa).

At threonine 59 the chain carries Phosphothreonine. Disordered stretches follow at residues 258–331 (KCNT…QSLS) and 339–358 (ARDS…EGFS). Phosphothreonine; by CDK1 is present on threonine 287. A compositionally biased stretch (low complexity) spans 299–319 (ASPDASFGKQWSSSSRSSYSS). Residues serine 300, serine 304, serine 319, serine 326, serine 329, serine 342, serine 345, serine 346, and serine 373 each carry the phosphoserine modification. Serine 382 carries the phosphoserine; by CDK1 modification. Residues 581 to 682 (AGTGSRGSSR…SSEAPDGPSS (102 aa)) form a disordered region. A phosphoserine mark is found at serine 593, serine 600, and serine 621. A compositionally biased stretch (polar residues) spans 643–658 (GSQNSLQAAPATTSSW). Residues 686 to 880 (LDFKVSGFFL…VAFILRQVIE (195 aa)) enclose the DDHD domain. Serine 896 bears the Phosphoserine mark. Residues 1206 to 1244 (QLLRSRGPSQAEREGPGTPPTTLARGKARSISLKLDSEE) are disordered. Omega-N-methylarginine is present on residues arginine 1211 and arginine 1218. Phosphoserine is present on serine 1237.

Belongs to the PtdIns transfer protein family. PI transfer class IIA subfamily. In terms of assembly, interacts with PIK4CA. Interacts with PTK2B via its C-terminus. Interacts with RHOA. Has higher affinity for the inactive, GDP-bound form of RHOA. The CDK1-phosphorylated form interacts with PLK1. Interacts with VAPB. Phosphorylated on multiple sites by CDK1 at the onset of mitosis. Phosphorylation facilitates dissociation from the Golgi complex and is required for interaction with PLK1. Post-translationally, phosphorylated on threonine residues upon treatment with oleic acid. In terms of processing, phosphorylated on tyrosine residues by PTK2B. Ubiquitous.

The protein localises to the cytoplasm. The protein resides in the golgi apparatus. It localises to the golgi stack membrane. Its subcellular location is the endoplasmic reticulum membrane. It is found in the lipid droplet. The protein localises to the cleavage furrow. The protein resides in the midbody. The enzyme catalyses a 1,2-diacyl-sn-glycero-3-phospho-(1D-myo-inositol)(in) = a 1,2-diacyl-sn-glycero-3-phospho-(1D-myo-inositol)(out). In terms of biological role, catalyzes the transfer of phosphatidylinositol (PI) between membranes. Binds PI, phosphatidylcholine (PC) and phosphatidic acid (PA) with the binding affinity order of PI &gt; PA &gt; PC. Regulates RHOA activity, and plays a role in cytoskeleton remodeling. Necessary for normal completion of cytokinesis. Plays a role in maintaining normal diacylglycerol levels in the Golgi apparatus. Necessary for maintaining the normal structure of the endoplasmic reticulum and the Golgi apparatus. Required for protein export from the endoplasmic reticulum and the Golgi. Binds calcium ions. In Homo sapiens (Human), this protein is Membrane-associated phosphatidylinositol transfer protein 1 (PITPNM1).